We begin with the raw amino-acid sequence, 449 residues long: Uric acid permease PucJ (449 aa).

Transmembrane regions (helical) follow at residues leucine 11–glycine 31, leucine 41–leucine 61, glycine 67–isoleucine 87, tyrosine 91–alanine 111, valine 119–proline 139, glutamate 158–leucine 178, valine 191–serine 211, alanine 229–valine 249, alanine 277–alanine 297, isoleucine 313–leucine 333, alanine 334–isoleucine 354, leucine 372–phenylalanine 392, and isoleucine 401–phenylalanine 421.

Belongs to the nucleobase:cation symporter-2 (NCS2) (TC 2.A.40) family.

The protein resides in the cell membrane. Uptake of uric acid. In Bacillus subtilis (strain 168), this protein is Uric acid permease PucJ (pucJ).